The primary structure comprises 128 residues: Sirohydrochlorin cobaltochelatase (128 aa).

Catalysis depends on H9, which acts as the Proton acceptor. A Co(2+)-binding site is contributed by H9. Residues K43 and 68 to 73 (FATGTH) each bind substrate. Co(2+) is bound at residue H73.

Belongs to the CbiX family. CbiXS subfamily. Homotetramer; dimer of dimers.

The enzyme catalyses Co-sirohydrochlorin + 2 H(+) = sirohydrochlorin + Co(2+). It participates in cofactor biosynthesis; adenosylcobalamin biosynthesis; cob(II)yrinate a,c-diamide from sirohydrochlorin (anaerobic route): step 1/10. Functionally, catalyzes the insertion of Co(2+) into sirohydrochlorin as part of the anaerobic pathway to cobalamin biosynthesis. This is Sirohydrochlorin cobaltochelatase from Saccharolobus solfataricus (strain ATCC 35092 / DSM 1617 / JCM 11322 / P2) (Sulfolobus solfataricus).